The sequence spans 122 residues: MIQMQSMLEVADNSGAKKVMCIKVLGGSHHMVAKLGDVIVVSVKDAIPGGKVKKGDVYKGVIVRTKTGVVRPDGSTIKFDKNALVLLNKQDEPIGTRVFGPVTRELRAKKYVRIMSLAEEVL.

Belongs to the universal ribosomal protein uL14 family. In terms of assembly, part of the 50S ribosomal subunit. Forms a cluster with proteins L3 and L19. In the 70S ribosome, L14 and L19 interact and together make contacts with the 16S rRNA in bridges B5 and B8.

Binds to 23S rRNA. Forms part of two intersubunit bridges in the 70S ribosome. In Rickettsia massiliae (strain Mtu5), this protein is Large ribosomal subunit protein uL14.